We begin with the raw amino-acid sequence, 73 residues long: Small ribosomal subunit protein eS27 (73 aa).

Residues Cys-28, Cys-31, Cys-47, and Cys-50 each coordinate Zn(2+). Residues 28–50 (CVDCGNEQIIFGNASTEVKCHIC) form a C4-type zinc finger.

This sequence belongs to the eukaryotic ribosomal protein eS27 family. As to quaternary structure, part of the 30S ribosomal subunit. Requires Zn(2+) as cofactor.

This chain is Small ribosomal subunit protein eS27, found in Methanopyrus kandleri (strain AV19 / DSM 6324 / JCM 9639 / NBRC 100938).